The primary structure comprises 76 residues: Adropin (76 aa).

The first 33 residues, 1–33 (MGAALSQGALIAIICNGLVGFLLLLLWVILCWA), serve as a signal peptide directing secretion. A disordered region spans residues 41–76 (IDSLSESSPNSSPGPCPEKAPPPQKPSHEGSYLLQP). Over residues 52-65 (SPGPCPEKAPPPQK) the composition is skewed to pro residues.

It localises to the secreted. Functionally, involved in the regulation of glucose homeostasis and lipid metabolism. This chain is Adropin (ENHO), found in Bos taurus (Bovine).